We begin with the raw amino-acid sequence, 240 residues long: Uridylate kinase (240 aa).

Residue 13–16 (KFSG) participates in ATP binding. Glycine 55 is a UMP binding site. 2 residues coordinate ATP: glycine 56 and arginine 60. UMP-binding positions include aspartate 76 and 137–144 (TGNPFFTT). 3 residues coordinate ATP: threonine 164, tyrosine 170, and aspartate 173.

The protein belongs to the UMP kinase family. Homohexamer.

The protein resides in the cytoplasm. It carries out the reaction UMP + ATP = UDP + ADP. Its pathway is pyrimidine metabolism; CTP biosynthesis via de novo pathway; UDP from UMP (UMPK route): step 1/1. With respect to regulation, inhibited by UTP. In terms of biological role, catalyzes the reversible phosphorylation of UMP to UDP. The chain is Uridylate kinase from Helicobacter pylori (strain J99 / ATCC 700824) (Campylobacter pylori J99).